The following is a 40-amino-acid chain: ARERMDEEELEAFYNCVRIIVKNKHLLKSDVRNVYEEQLD.

This sequence belongs to the potexviruses/carlaviruses RNA replication protein family.

It carries out the reaction RNA(n) + a ribonucleoside 5'-triphosphate = RNA(n+1) + diphosphate. It catalyses the reaction ATP + H2O = ADP + phosphate + H(+). Functionally, RNA replication. The central part of this protein possibly functions as an ATP-binding helicase. The chain is RNA replication protein from Lily symptomless virus (LSV).